Reading from the N-terminus, the 383-residue chain is Oxysterol-binding protein-related protein 4B (383 aa).

Belongs to the OSBP family. In terms of tissue distribution, expressed in stems and flowers.

Its function is as follows. May be involved in the transport of sterols. The sequence is that of Oxysterol-binding protein-related protein 4B (ORP4B) from Arabidopsis thaliana (Mouse-ear cress).